Here is a 228-residue protein sequence, read N- to C-terminus: Non-specific lipid-transfer protein EPAD1 (228 aa).

Positions 1–24 (MERSHLAVLLGLLAFAAGVPAAAA) are cleaved as a signal peptide. Cystine bridges form between Cys-40-Cys-62, Cys-63-Cys-105, and Cys-78-Cys-119. Residue Asn-94 is glycosylated (N-linked (GlcNAc...) asparagine). Positions 124-207 (PPASIVTAPP…PPRSGASSSL (84 aa)) are disordered. A compositionally biased stretch (pro residues) spans 145–162 (REAPPPPPAAEKLSPPPQ).

The protein belongs to the plant LTP family. As to expression, expressed in young panicles. Specifically expressed in pollen mother cells and young microspores.

It is found in the cell membrane. Plant non-specific lipid-transfer protein that binds phospholipids in vitro. Required for correct pollen exine patterning by controlling the continuity and homogeneity of the primexine distribution. The polypeptide is Non-specific lipid-transfer protein EPAD1 (Oryza sativa subsp. japonica (Rice)).